The sequence spans 252 residues: Pyrroloquinoline-quinone synthase (252 aa).

This sequence belongs to the PqqC family.

The catalysed reaction is 6-(2-amino-2-carboxyethyl)-7,8-dioxo-1,2,3,4,7,8-hexahydroquinoline-2,4-dicarboxylate + 3 O2 = pyrroloquinoline quinone + 2 H2O2 + 2 H2O + H(+). The protein operates within cofactor biosynthesis; pyrroloquinoline quinone biosynthesis. Ring cyclization and eight-electron oxidation of 3a-(2-amino-2-carboxyethyl)-4,5-dioxo-4,5,6,7,8,9-hexahydroquinoline-7,9-dicarboxylic-acid to PQQ. In Acinetobacter baumannii (strain ACICU), this protein is Pyrroloquinoline-quinone synthase.